Here is a 294-residue protein sequence, read N- to C-terminus: 4-hydroxy-tetrahydrodipicolinate synthase (294 aa).

T45 is a pyruvate binding site. The active-site Proton donor/acceptor is the Y133. K161 serves as the catalytic Schiff-base intermediate with substrate. Residue I203 participates in pyruvate binding.

Belongs to the DapA family. As to quaternary structure, homotetramer; dimer of dimers.

The protein resides in the cytoplasm. The enzyme catalyses L-aspartate 4-semialdehyde + pyruvate = (2S,4S)-4-hydroxy-2,3,4,5-tetrahydrodipicolinate + H2O + H(+). It participates in amino-acid biosynthesis; L-lysine biosynthesis via DAP pathway; (S)-tetrahydrodipicolinate from L-aspartate: step 3/4. In terms of biological role, catalyzes the condensation of (S)-aspartate-beta-semialdehyde [(S)-ASA] and pyruvate to 4-hydroxy-tetrahydrodipicolinate (HTPA). The chain is 4-hydroxy-tetrahydrodipicolinate synthase from Shewanella sp. (strain W3-18-1).